The sequence spans 382 residues: Gibberellin 2-beta-dioxygenase 1 (382 aa).

The Fe2OG dioxygenase domain maps to 189–321 (DSDCLLRINH…RLSTIYFASP (133 aa)). Y199 contacts 2-oxoglutarate. Positions 241, 243, and 302 each coordinate Fe cation. Residues R312 and S314 each coordinate 2-oxoglutarate.

This sequence belongs to the iron/ascorbate-dependent oxidoreductase family. GA2OX subfamily. L-ascorbate is required as a cofactor. Fe(2+) serves as cofactor. Expressed in roots, shoot apex, and in the basal region of leaf primordia and young leaves.

It carries out the reaction gibberellin A1 + 2-oxoglutarate + O2 = gibberellin A8 + succinate + CO2. In terms of biological role, catalyzes the 2-beta-hydroxylation of several biologically active gibberellins, leading to the homeostatic regulation of their endogenous level. Catabolism of gibberellins (GAs) plays a central role in plant development. Controls the level of bioactive GAs in the shoot apical meristem, which regulates the vegetative to reproductive phase transition. In vitro, converts GA1, GA4, GA9, GA20, and GA44 to the corresponding 2-beta-hydroxylated products GA8, GA34, GA51, GA29, and GA98, respectively. The sequence is that of Gibberellin 2-beta-dioxygenase 1 from Oryza sativa subsp. japonica (Rice).